The following is a 130-amino-acid chain: Glycine cleavage system H protein (130 aa).

One can recognise a Lipoyl-binding domain in the interval 24–106 (GIKVGISAFA…YQEGWLLKIT (83 aa)). Lysine 65 carries the post-translational modification N6-lipoyllysine.

The protein belongs to the GcvH family. The glycine cleavage system is composed of four proteins: P, T, L and H. Requires (R)-lipoate as cofactor.

The glycine cleavage system catalyzes the degradation of glycine. The H protein shuttles the methylamine group of glycine from the P protein to the T protein. The protein is Glycine cleavage system H protein of Synechococcus sp. (strain RCC307).